The following is a 33-amino-acid chain: Photosystem II reaction center protein T (33 aa).

Residues 3-23 (ALVYTFLLVSTLGIIFFAIFF) traverse the membrane as a helical segment.

The protein belongs to the PsbT family. In terms of assembly, PSII is composed of 1 copy each of membrane proteins PsbA, PsbB, PsbC, PsbD, PsbE, PsbF, PsbH, PsbI, PsbJ, PsbK, PsbL, PsbM, PsbT, PsbY, PsbZ, Psb30/Ycf12, at least 3 peripheral proteins of the oxygen-evolving complex and a large number of cofactors. It forms dimeric complexes.

The protein resides in the plastid. It localises to the chloroplast thylakoid membrane. In terms of biological role, found at the monomer-monomer interface of the photosystem II (PS II) dimer, plays a role in assembly and dimerization of PSII. PSII is a light-driven water plastoquinone oxidoreductase, using light energy to abstract electrons from H(2)O, generating a proton gradient subsequently used for ATP formation. In Arabidopsis thaliana (Mouse-ear cress), this protein is Photosystem II reaction center protein T.